We begin with the raw amino-acid sequence, 461 residues long: MIQPDSYVRSLLKRSPGESVTARGWVKTRRDSKNVHFIQLNDGSSPVDLQVVLDAGVVPEDVVAKITTGACISVEGDLVASMGKGQAVEIKARALTVHGTADPEHYPLQKKKHTLETLRELGHLRTRSNTFGAVFRVRNALACAIHKFFQDRGFMYVHTPVISASDAEGAGSMFQVTTLDLQSPKPADFTGDFFGKHTYLTVSGQLEAEIFAHAFANVYTFGPTFRAENSNTPRHLAEFYMIEPEMAFCDLKDNQDLAEAFLKSQVEYVVNACGPDLDFLAKWYDPELRKTLDGLMNASFERITYTEAIDLLQRSGRSFEFPTQWGSDMQSEHERYLTEEVFNKPVIVTDYPKDIKAFYMRGNDDGKTVAAMDVLAPRIGEIIGGSQREERHDVLLQRIREMAAHGLREEAYWWYLDLRRFGGVEHAGFGMGFERMLMYLTGMKNIRDVIPFPRTPGNAEF.

This sequence belongs to the class-II aminoacyl-tRNA synthetase family. In terms of assembly, homodimer.

It localises to the cytoplasm. The enzyme catalyses tRNA(Asn) + L-asparagine + ATP = L-asparaginyl-tRNA(Asn) + AMP + diphosphate + H(+). The sequence is that of Asparagine--tRNA ligase from Solibacter usitatus (strain Ellin6076).